Reading from the N-terminus, the 436-residue chain is Glutamyl-tRNA reductase (436 aa).

Residues 52–55, S105, 110–112, and Q116 each bind substrate; these read TCHR and EDQ. C53 functions as the Nucleophile in the catalytic mechanism. 184–189 is an NADP(+) binding site; sequence GAGEMG.

This sequence belongs to the glutamyl-tRNA reductase family. In terms of assembly, homodimer.

The enzyme catalyses (S)-4-amino-5-oxopentanoate + tRNA(Glu) + NADP(+) = L-glutamyl-tRNA(Glu) + NADPH + H(+). Its pathway is porphyrin-containing compound metabolism; protoporphyrin-IX biosynthesis; 5-aminolevulinate from L-glutamyl-tRNA(Glu): step 1/2. In terms of biological role, catalyzes the NADPH-dependent reduction of glutamyl-tRNA(Glu) to glutamate 1-semialdehyde (GSA). The chain is Glutamyl-tRNA reductase from Halobacterium salinarum (strain ATCC 29341 / DSM 671 / R1).